Here is a 579-residue protein sequence, read N- to C-terminus: L-arabinonate dehydratase (579 aa).

Cys59 lines the [2Fe-2S] cluster pocket. Glu91 provides a ligand contact to Mg(2+). Cys127 contributes to the [2Fe-2S] cluster binding site. Residue Asp128 participates in Mg(2+) binding. Residue Cys200 coordinates [2Fe-2S] cluster. A Mg(2+)-binding site is contributed by Glu453.

Belongs to the IlvD/Edd family. Homotetramer. [2Fe-2S] cluster is required as a cofactor. The cofactor is Mg(2+).

It carries out the reaction L-arabinonate = 2-dehydro-3-deoxy-L-arabinonate + H2O. The enzyme catalyses D-galactonate = 2-dehydro-3-deoxy-D-galactonate + H2O. It catalyses the reaction D-fuconate = 2-dehydro-3-deoxy-D-fuconate + H2O. It participates in carbohydrate metabolism. Catalyzes the dehydration of L-arabinonate to 2-dehydro-3-deoxy-L-arabinonate during L-arabinose degradation. Can also dehydrate D-galactonate and D-fuconate with good catalytic efficiency. Has weak activity with D-xylonate and D-gluconate. The polypeptide is L-arabinonate dehydratase (Rhizobium leguminosarum bv. trifolii (strain WSM2304)).